Reading from the N-terminus, the 62-residue chain is Photosystem II reaction center protein Z (62 aa).

Transmembrane regions (helical) follow at residues 8-28 (AVFA…LVFA) and 41-61 (FSGT…NSLI).

It belongs to the PsbZ family. As to quaternary structure, PSII is composed of 1 copy each of membrane proteins PsbA, PsbB, PsbC, PsbD, PsbE, PsbF, PsbH, PsbI, PsbJ, PsbK, PsbL, PsbM, PsbT, PsbY, PsbZ, Psb30/Ycf12, at least 3 peripheral proteins of the oxygen-evolving complex and a large number of cofactors. It forms dimeric complexes.

The protein localises to the plastid. It localises to the chloroplast thylakoid membrane. In terms of biological role, may control the interaction of photosystem II (PSII) cores with the light-harvesting antenna, regulates electron flow through the 2 photosystem reaction centers. PSII is a light-driven water plastoquinone oxidoreductase, using light energy to abstract electrons from H(2)O, generating a proton gradient subsequently used for ATP formation. This Oryza nivara (Indian wild rice) protein is Photosystem II reaction center protein Z.